A 361-amino-acid chain; its full sequence is Elongator complex protein 4 (361 aa).

2 disordered regions span residues 93–124 and 338–361; these read QLPG…PQQE and DDEQ…SLDF. Composition is skewed to polar residues over residues 104–121 and 346–355; these read NENS…SKNP and ISNTNPQKQP.

It belongs to the ELP4 family. In terms of assembly, component of the elongator complex.

It localises to the cytoplasm. The protein localises to the nucleus. The protein operates within tRNA modification; 5-methoxycarbonylmethyl-2-thiouridine-tRNA biosynthesis. In terms of biological role, component of the elongator complex, a multiprotein complex which is required for multiple tRNA modifications, including mcm5U (5-methoxycarbonylmethyl uridine), mcm5s2U (5-methoxycarbonylmethyl-2-thiouridine), and ncm5U (5-carbamoylmethyl uridine). The elongator complex catalyzes formation of carboxymethyluridine in the wobble base at position 34 in tRNAs. This chain is Elongator complex protein 4, found in Schizosaccharomyces pombe (strain 972 / ATCC 24843) (Fission yeast).